Here is a 311-residue protein sequence, read N- to C-terminus: 2-dehydro-3-deoxygluconokinase (311 aa).

Substrate contacts are provided by residues 34–35 (GS), 106–108 (YYR), and R166. ATP is bound by residues 164–166 (NIR), 224–229 (KLGPKG), 253–256 (GAGD), and S283. Substrate contacts are provided by G253 and D256. Catalysis depends on D256, which acts as the Proton acceptor. Residue D292 participates in substrate binding.

Belongs to the carbohydrate kinase PfkB family. In terms of assembly, homotetramer. A divalent metal cation serves as cofactor.

It catalyses the reaction 2-dehydro-3-deoxy-D-gluconate + ATP = 2-dehydro-3-deoxy-6-phospho-D-gluconate + ADP + H(+). Its pathway is carbohydrate acid metabolism; 2-dehydro-3-deoxy-D-gluconate degradation; D-glyceraldehyde 3-phosphate and pyruvate from 2-dehydro-3-deoxy-D-gluconate: step 1/2. In terms of biological role, involved in the degradation of glucose via the semi-phosphorylative Entner-Doudoroff pathway. Catalyzes the phosphorylation of 2-keto-3-deoxygluconate (KDG) to produce 2-keto-3-deoxy-6-phosphogluconate (KDPG). Can also use GTP, but not ADP or AMP, as a phosphoryl donor and 2-keto-D-gluconate (KG) as a phosphoryl acceptor. The chain is 2-dehydro-3-deoxygluconokinase from Sulfurisphaera tokodaii (strain DSM 16993 / JCM 10545 / NBRC 100140 / 7) (Sulfolobus tokodaii).